A 362-amino-acid chain; its full sequence is Aminomethyltransferase (362 aa).

Belongs to the GcvT family. The glycine cleavage system is composed of four proteins: P, T, L and H.

It carries out the reaction N(6)-[(R)-S(8)-aminomethyldihydrolipoyl]-L-lysyl-[protein] + (6S)-5,6,7,8-tetrahydrofolate = N(6)-[(R)-dihydrolipoyl]-L-lysyl-[protein] + (6R)-5,10-methylene-5,6,7,8-tetrahydrofolate + NH4(+). In terms of biological role, the glycine cleavage system catalyzes the degradation of glycine. The chain is Aminomethyltransferase from Porphyromonas gingivalis (strain ATCC 33277 / DSM 20709 / CIP 103683 / JCM 12257 / NCTC 11834 / 2561).